The primary structure comprises 245 residues: 23S rRNA (guanosine-2'-O-)-methyltransferase RlmB (245 aa).

S-adenosyl-L-methionine-binding residues include G197, I217, and L226.

The protein belongs to the class IV-like SAM-binding methyltransferase superfamily. RNA methyltransferase TrmH family. RlmB subfamily.

Its subcellular location is the cytoplasm. The catalysed reaction is guanosine(2251) in 23S rRNA + S-adenosyl-L-methionine = 2'-O-methylguanosine(2251) in 23S rRNA + S-adenosyl-L-homocysteine + H(+). In terms of biological role, specifically methylates the ribose of guanosine 2251 in 23S rRNA. In Bordetella parapertussis (strain 12822 / ATCC BAA-587 / NCTC 13253), this protein is 23S rRNA (guanosine-2'-O-)-methyltransferase RlmB.